Here is a 312-residue protein sequence, read N- to C-terminus: Pantothenate kinase (312 aa).

Residue G97–S104 coordinates ATP.

The protein belongs to the prokaryotic pantothenate kinase family.

It localises to the cytoplasm. The catalysed reaction is (R)-pantothenate + ATP = (R)-4'-phosphopantothenate + ADP + H(+). It participates in cofactor biosynthesis; coenzyme A biosynthesis; CoA from (R)-pantothenate: step 1/5. This is Pantothenate kinase from Mycobacterium marinum (strain ATCC BAA-535 / M).